The following is a 275-amino-acid chain: Large ribosomal subunit protein uL2c (275 aa).

Disordered regions lie at residues 1–30 (MAIHLYKTSTPSTRNGAVDSQAKSTPQKQK) and 225–275 (MNPV…RRRK). Residues 21–30 (QAKSTPQKQK) show a composition bias toward polar residues.

The protein belongs to the universal ribosomal protein uL2 family. As to quaternary structure, part of the 50S ribosomal subunit.

It is found in the plastid. The protein resides in the chloroplast. This Illicium oligandrum (Star anise) protein is Large ribosomal subunit protein uL2c (rpl2).